The following is a 694-amino-acid chain: MAPGQNRVVALVDMDCFFVQVEQRQNPHLRNKPCAVVQYKSWKGGGIIAVSYEARAFGVTRNMWADDAKKLCPDLLLAQVRESRGKANLTKYREASVEVMEIMSYFAVIERASIDEAYIDLTSAVQERLQKLQGQPISADLLPSTYIEGLPRGPTVEETVQKEAIRKQGLLQWLDSLQSDDPTSPDLRLTVGAMIVEEMRAAIESKTGFQCSAGISHNKVLAKLACGLNKPNRQTLVSHGSVPQLFSQMPIRKIRSLGGKLGASVIEVLGIEYMGDLTQFTESQLQSHFGEKNGSWLYAMCRGIEHDPVKPRQLPKTIGCSKNFPGKTALATREQVQWWLLQLALELEERLTKDRNDNDRVATQLVVSIRFQGDRRLSSLRRCCALPRYDAHKMSQDAFAAIRNCNTSGIQTEWSPPLTMLFLCATKFSAAAPPACTDITAFLSSDSSCQPKVPIASSETRTQGSGPAVPTSKEAATSLASFFQKAAKKQRMKETSFVPLNTATEKLSSKPSLVFQSSQTTGSQSFFKQKSLLLQHTQLSNSAAPDPPQASPAAQPSCLPAECVDSGPDDGAVKPVSSKAVSTEMNVAGDSPNVLDSPAYNSQEVTQRATEDQVLCEKCDSLVPVWDMPEHTDYHFALELQKSFLQPCTSKPQAIPAVSPQGKRNPKSPSASSSKRLRPHGMQTLESFFKPLTH.

The 250-residue stretch at Val9–Gly258 folds into the UmuC domain. Positions 13 and 14 each coordinate Mg(2+). Residues Asp13 and Met14 each coordinate Mn(2+). Arg61 is a binding site for a 2'-deoxyribonucleoside 5'-triphosphate. The Mg(2+) site is built by Asp115 and Glu116. Residues Asp115 and Glu116 each contribute to the Mn(2+) site. Residue Glu116 is part of the active site. The disordered stretch occupies residues Asp565–Pro598. The segment at Ala609–Ser643 adopts a UBZ3-type zinc-finger fold. Cys616, Cys619, His631, and His635 together coordinate Zn(2+). Residues Lys651–His694 form a disordered region. Glycyl lysine isopeptide (Lys-Gly) (interchain with G-Cter in ubiquitin) cross-links involve residues Lys663, Lys667, and Lys675. The PIP-box signature appears at Met682–Phe689. Lys690 is covalently cross-linked (Glycyl lysine isopeptide (Lys-Gly) (interchain with G-Cter in ubiquitin)).

Belongs to the DNA polymerase type-Y family. As to quaternary structure, interacts with REV1. Interacts with monoubiquitinated PCNA, but not unmodified PCNA. Interacts with POLI; this interaction targets POLI to the replication machinery. Interacts with PALB2 and BRCA2; the interactions are direct and are required to sustain the recruitment of POLH at blocked replication forks and to stimulate POLH-dependent DNA synthesis on D loop substrates. Interacts (via C-terminus) with TRAIP. Interacts with ubiquitin. Interacts with POLDIP2. Mg(2+) serves as cofactor. It depends on Mn(2+) as a cofactor. Post-translationally, monoubiquitinated by RCHY1/PIRH2. Ubiquitination depends on integrity of the UBZ3-type zinc finger domain and is enhanced by TRAIP. Ubiquitination inhibits the ability of PolH to interact with PCNA and to bypass UV-induced lesions. Ubiquitous.

The protein localises to the nucleus. The enzyme catalyses DNA(n) + a 2'-deoxyribonucleoside 5'-triphosphate = DNA(n+1) + diphosphate. The enzyme in complex with the DNA substrate binds a third divalent metal cation. The binding of this third divalent cation, which is coordinated by water molecules and two oxygen atoms from DNA and dNTP, is essential for catalyzing the DNA synthesis. In terms of biological role, DNA polymerase specifically involved in the DNA repair by translesion synthesis (TLS). Due to low processivity on both damaged and normal DNA, cooperates with the heterotetrameric (REV3L, REV7, POLD2 and POLD3) POLZ complex for complete bypass of DNA lesions. Inserts one or 2 nucleotide(s) opposite the lesion, the primer is further extended by the tetrameric POLZ complex. In the case of 1,2-intrastrand d(GpG)-cisplatin cross-link, inserts dCTP opposite the 3' guanine. Particularly important for the repair of UV-induced pyrimidine dimers. Although inserts the correct base, may cause base transitions and transversions depending upon the context. May play a role in hypermutation at immunoglobulin genes. Forms a Schiff base with 5'-deoxyribose phosphate at abasic sites, but does not have any lyase activity, preventing the release of the 5'-deoxyribose phosphate (5'-dRP) residue. This covalent trapping of the enzyme by the 5'-dRP residue inhibits its DNA synthetic activity during base excision repair, thereby avoiding high incidence of mutagenesis. Targets POLI to replication foci. The sequence is that of DNA polymerase eta (Polh) from Mus musculus (Mouse).